The sequence spans 167 residues: Zinc finger CCCH domain-containing protein 3 (167 aa).

The C3H1-type zinc finger occupies 63–91 (AAAIGVCQHFVRTGTCKFGDSCRYFHPKP). Residues 89–101 (PKPPPANPGPAPS) are compositionally biased toward pro residues. The interval 89-167 (PKPPPANPGP…YPPFPFVDWG (79 aa)) is disordered. Residues 108-120 (MAQQSNIQGSQPN) are compositionally biased toward polar residues. Pro residues predominate over residues 149 to 167 (SLRPPPEGGYPPFPFVDWG).

The sequence is that of Zinc finger CCCH domain-containing protein 3 from Oryza sativa subsp. japonica (Rice).